We begin with the raw amino-acid sequence, 449 residues long: tRNA (guanine(37)-N(1))-methyltransferase (449 aa).

Residues His216, 254–255 (DL), 282–283 (DG), and Asn345 each bind S-adenosyl-L-methionine.

The protein belongs to the class I-like SAM-binding methyltransferase superfamily. TRM5/TYW2 family. Monomer.

The protein resides in the mitochondrion matrix. It is found in the nucleus. It localises to the cytoplasm. It catalyses the reaction guanosine(37) in tRNA + S-adenosyl-L-methionine = N(1)-methylguanosine(37) in tRNA + S-adenosyl-L-homocysteine + H(+). Its function is as follows. Specifically methylates the N1 position of guanosine-37 in various cytoplasmic and mitochondrial tRNAs. Methylation is not dependent on the nature of the nucleoside 5' of the target nucleoside. This is the first step in the biosynthesis of wybutosine (yW), a modified base adjacent to the anticodon of tRNAs and required for accurate decoding. The chain is tRNA (guanine(37)-N(1))-methyltransferase from Candida albicans (strain WO-1) (Yeast).